The sequence spans 134 residues: Agouti-related protein (134 aa).

Residues 1–20 (MLTAVLLSCALLLAMPPLQG) form the signal peptide. Positions 21 to 84 (AQMGPAPLEG…VLDPEGRKPR (64 aa)) are excised as a propeptide. Cystine bridges form between C89–C104, C96–C110, C103–C121, C107–C131, and C112–C119. The region spanning 89 to 131 (CVRLHESCLGHQVPCCDPCATCYCRFFNAFCYCRKLGTTTNPC) is the Agouti domain. An interaction with melanocortin receptors region spans residues 113–115 (RFF).

In terms of assembly, interacts with melanocortin receptors MC3R, MC4R and MC5R.

The protein resides in the secreted. It is found in the golgi apparatus lumen. Its function is as follows. Plays a role in weight homeostasis. Involved in the control of feeding behavior through the central melanocortin system. Acts as alpha melanocyte-stimulating hormone antagonist by inhibiting cAMP production mediated by stimulation of melanocortin receptors within the hypothalamus and adrenal gland. Has very low activity with MC5R. Is an inverse agonist for MC3R and MC4R being able to suppress their constitutive activity. It promotes MC3R and MC4R endocytosis in an arrestin-dependent manner. This chain is Agouti-related protein (AGRP), found in Bos taurus (Bovine).